A 417-amino-acid polypeptide reads, in one-letter code: Transcobalamin-1 (417 aa).

A signal peptide spans methionine 1 to serine 25. Positions glutamine 24 to lysine 308 are globular N-terminal alpha domain. Asparagine 90 is a glycosylation site (N-linked (GlcNAc...) asparagine). Cyanocob(III)alamin is bound at residue threonine 143–glutamine 147. Cysteine 156 and cysteine 198 are oxidised to a cystine. N-linked (GlcNAc...) asparagine glycans are attached at residues asparagine 161, asparagine 166, and asparagine 179. The cyanocob(III)alamin site is built by aspartate 187 and glutamine 287. The flexible linker stretch occupies residues valine 309–glutamate 327. N-linked (GlcNAc...) asparagine glycosylation is found at asparagine 312, asparagine 328, asparagine 345, and asparagine 360. A globular C-terminal beta domain region spans residues asparagine 328–isoleucine 417. Residues tyrosine 376–isoleucine 377 and tryptophan 393–histidine 395 contribute to the cyanocob(III)alamin site.

This sequence belongs to the eukaryotic cobalamin transport proteins family. In terms of processing, contains about 30% carbohydrates. Haptocorrins are a family of cobalamin-binding glycoproteins found in blood, salivary and mucosal secretions.

The protein localises to the secreted. Its function is as follows. Binds vitamin B12 with femtomolar affinity and protects it from the acidic environment of the stomach. Binds to cobalamin and to cobalamin analogs such as cobinamide. In Sus scrofa (Pig), this protein is Transcobalamin-1 (TCN1).